The following is a 415-amino-acid chain: MATH domain and coiled-coil domain-containing protein At2g42465 (415 aa).

The MATH domain maps to 6-130 (RKALTLTVTN…NDRFNIEIYI (125 aa)). Residues 244–341 (FKLEWLKAKL…LLKDTYSDLK (98 aa)) adopt a coiled-coil conformation.

This Arabidopsis thaliana (Mouse-ear cress) protein is MATH domain and coiled-coil domain-containing protein At2g42465.